The sequence spans 258 residues: Type III pantothenate kinase (258 aa).

Position 6–13 (6–13) interacts with ATP; the sequence is DVGNTQIF. 107 to 110 provides a ligand contact to substrate; that stretch reads GADR. D109 acts as the Proton acceptor in catalysis. Residue D130 coordinates K(+). T133 is an ATP binding site. Substrate is bound at residue T185.

The protein belongs to the type III pantothenate kinase family. Homodimer. The cofactor is NH4(+). K(+) is required as a cofactor.

Its subcellular location is the cytoplasm. It carries out the reaction (R)-pantothenate + ATP = (R)-4'-phosphopantothenate + ADP + H(+). The protein operates within cofactor biosynthesis; coenzyme A biosynthesis; CoA from (R)-pantothenate: step 1/5. In terms of biological role, catalyzes the phosphorylation of pantothenate (Pan), the first step in CoA biosynthesis. The sequence is that of Type III pantothenate kinase from Elusimicrobium minutum (strain Pei191).